Reading from the N-terminus, the 428-residue chain is Small ribosomal subunit protein uS2m (428 aa).

The tract at residues 30–50 (FLSQDNFTAPPPPPTNSKKQA) is disordered.

It belongs to the universal ribosomal protein uS2 family. Component of the mitochondrial small ribosomal subunit (mt-SSU). Mature N.crassa 74S mitochondrial ribosomes consist of a small (37S) and a large (54S) subunit. The 37S small subunit contains a 16S ribosomal RNA (16S mt-rRNA) and 32 different proteins. The 54S large subunit contains a 23S rRNA (23S mt-rRNA) and 42 different proteins.

The protein resides in the mitochondrion. In terms of biological role, component of the mitochondrial ribosome (mitoribosome), a dedicated translation machinery responsible for the synthesis of mitochondrial genome-encoded proteins, including at least some of the essential transmembrane subunits of the mitochondrial respiratory chain. The mitoribosomes are attached to the mitochondrial inner membrane and translation products are cotranslationally integrated into the membrane. The polypeptide is Small ribosomal subunit protein uS2m (mrp4) (Neurospora crassa (strain ATCC 24698 / 74-OR23-1A / CBS 708.71 / DSM 1257 / FGSC 987)).